We begin with the raw amino-acid sequence, 208 residues long: NAD(P)H dehydrogenase (quinone) (208 aa).

The 189-residue stretch at 4–192 (VLVLYYSSYG…DGARFQGRHV (189 aa)) folds into the Flavodoxin-like domain. FMN-binding positions include 10–15 (SSYGHV) and 78–80 (TRF). Tyr12 contributes to the NAD(+) binding site. Trp98 contacts substrate. FMN-binding positions include 113–119 (STGSQHG) and His134. Residues 161–183 (YGASTLADDGDGGDRQPSANELD) are disordered.

It belongs to the WrbA family. FMN serves as cofactor.

It catalyses the reaction a quinone + NADH + H(+) = a quinol + NAD(+). The catalysed reaction is a quinone + NADPH + H(+) = a quinol + NADP(+). The chain is NAD(P)H dehydrogenase (quinone) from Paracoccus denitrificans (strain Pd 1222).